Reading from the N-terminus, the 39-residue chain is Photosystem II reaction center protein J (39 aa).

Residues 9–29 (LWLVATVGGIAVITVLGIFIY) traverse the membrane as a helical segment.

The protein belongs to the PsbJ family. As to quaternary structure, PSII is composed of 1 copy each of membrane proteins PsbA, PsbB, PsbC, PsbD, PsbE, PsbF, PsbH, PsbI, PsbJ, PsbK, PsbL, PsbM, PsbT, PsbX, PsbY, PsbZ, Psb30/Ycf12, at least 3 peripheral proteins of the oxygen-evolving complex and a large number of cofactors. It forms dimeric complexes.

It localises to the plastid. The protein localises to the chloroplast thylakoid membrane. Functionally, one of the components of the core complex of photosystem II (PSII). PSII is a light-driven water:plastoquinone oxidoreductase that uses light energy to abstract electrons from H(2)O, generating O(2) and a proton gradient subsequently used for ATP formation. It consists of a core antenna complex that captures photons, and an electron transfer chain that converts photonic excitation into a charge separation. This chain is Photosystem II reaction center protein J, found in Gracilaria tenuistipitata var. liui (Red alga).